Consider the following 433-residue polypeptide: FAD-dependent monooxygenase notI' (433 aa).

Glutamate 45 and arginine 117 together coordinate FAD. The active site involves arginine 195. FAD-binding residues include aspartate 314 and alanine 327.

Belongs to the paxM FAD-dependent monooxygenase family. FAD is required as a cofactor.

Its pathway is alkaloid biosynthesis. Functionally, FAD-dependent monooxygenase; part of the gene cluster that mediates the biosynthesis of notoamide, a fungal indole alkaloid that belongs to a family of natural products containing a characteristic bicyclo[2.2.2]diazaoctane core. The first step of notoamide biosynthesis involves coupling of L-proline and L-tryptophan by the bimodular NRPS notE', to produce cyclo-L-tryptophan-L-proline called brevianamide F. The reverse prenyltransferase notF' then acts as a deoxybrevianamide E synthase and converts brevianamide F to deoxybrevianamide E via reverse prenylation at C-2 of the indole ring leading to the bicyclo[2.2.2]diazaoctane core. Deoxybrevianamide E is further hydroxylated at C-6 of the indole ring, likely catalyzed by the cytochrome P450 monooxygenase notG', to yield 6-hydroxy-deoxybrevianamide E. 6-hydroxy-deoxybrevianamide E is a specific substrate of the prenyltransferase notC' for normal prenylation at C-7 to produce 6-hydroxy-7-prenyl-deoxybrevianamide, also called notoamide S. As the proposed pivotal branching point in notoamide biosynthesis, notoamide S can be diverted to notoamide E through an oxidative pyran ring closure putatively catalyzed by either notH' cytochrome P450 monooxygenase or the notD' FAD-linked oxidoreductase. This step would be followed by an indole 2,3-epoxidation-initiated pinacol-like rearrangement catalyzed by the notB' FAD-dependent monooxygenase leading to the formation of notoamide C and notoamide D. On the other hand notoamide S is converted to notoamide T by notH' (or notD'), a bifunctional oxidase that also functions as the intramolecular Diels-Alderase responsible for generation of (-)-notoamide T. To generate antipodal (+)-notoaminide T, notH (or notD) in Aspergillus strain MF297-2 is expected to catalyze a Diels-Alder reaction leading to the opposite stereochemistry. The remaining oxidoreductase notD' (or notH') likely catalyzes the oxidative pyran ring formation to yield (-)-stephacidin A. The FAD-dependent monooxygenase notI' is highly similar to notB' and is predicted to catalyze a similar conversion from (-)-stephacidin A to (+)-notoamide B via the 2,3-epoxidation of (-)-stephacidin A followed by a pinacol-type rearrangement. Finally, it remains unclear which enzyme could be responsible for the final hydroxylation steps leading to notoamide A and sclerotiamide. The chain is FAD-dependent monooxygenase notI' from Aspergillus versicolor.